The sequence spans 174 residues: Urease accessory protein UreE (174 aa).

It belongs to the UreE family.

Its subcellular location is the cytoplasm. Functionally, involved in urease metallocenter assembly. Binds nickel. Probably functions as a nickel donor during metallocenter assembly. The sequence is that of Urease accessory protein UreE from Helicobacter hepaticus (strain ATCC 51449 / 3B1).